The primary structure comprises 107 residues: Nucleoid-associated protein Atu0095 (107 aa).

A disordered region spans residues K81–F107. The segment covering P98–F107 has biased composition (pro residues).

This sequence belongs to the YbaB/EbfC family. In terms of assembly, homodimer.

It is found in the cytoplasm. It localises to the nucleoid. Binds to DNA and alters its conformation. May be involved in regulation of gene expression, nucleoid organization and DNA protection. The chain is Nucleoid-associated protein Atu0095 from Agrobacterium fabrum (strain C58 / ATCC 33970) (Agrobacterium tumefaciens (strain C58)).